Here is a 105-residue protein sequence, read N- to C-terminus: Synaptic plasticity regulator PANTS (105 aa).

This sequence belongs to the UPF0545 family. As to quaternary structure, interacts with RTN4 isoform A/Nogo-A; the interaction results in enhanced RTN4-mediated inhibition of AMPA receptor clustering. Also interacts with NCAM1, RANBP2 and CCT8. Rapidly degraded by proteolysis following neuronal stimulation, resulting in increased AMPA receptor clustering. As to expression, in the postnatal brain, expressed diffusely throughout the hippocampus at a low level at 8 weeks (at protein level). At 16 weeks, strongly expressed in the stratum lucidum of the hippocampus (at protein level). In developing and aging brain, expression is strongest in hippocampus, especially in areas CA3 and CA2, throughout the dorsoventral axis.

It localises to the synapse. It is found in the synaptic cleft. Its function is as follows. Negatively regulates long-term potentiation and modulates adult synaptic plasticity. Stabilizes the interaction of RTN4 isoform A/Nogo-A with its receptors, inhibiting clustering of postsynaptic AMPA receptors at synaptic sites. Upon neuronal stimulation, degraded at synapses, reducing RTN4 signaling and allowing AMPA receptor clustering at individual synapses. This chain is Synaptic plasticity regulator PANTS, found in Mus musculus (Mouse).